The sequence spans 158 residues: NAD(P)H-quinone oxidoreductase subunit J, chloroplastic (158 aa).

The protein belongs to the complex I 30 kDa subunit family. As to quaternary structure, NDH is composed of at least 16 different subunits, 5 of which are encoded in the nucleus.

It is found in the plastid. It localises to the chloroplast thylakoid membrane. The enzyme catalyses a plastoquinone + NADH + (n+1) H(+)(in) = a plastoquinol + NAD(+) + n H(+)(out). It catalyses the reaction a plastoquinone + NADPH + (n+1) H(+)(in) = a plastoquinol + NADP(+) + n H(+)(out). Its function is as follows. NDH shuttles electrons from NAD(P)H:plastoquinone, via FMN and iron-sulfur (Fe-S) centers, to quinones in the photosynthetic chain and possibly in a chloroplast respiratory chain. The immediate electron acceptor for the enzyme in this species is believed to be plastoquinone. Couples the redox reaction to proton translocation, and thus conserves the redox energy in a proton gradient. In Acorus calamus var. americanus (American sweet flag), this protein is NAD(P)H-quinone oxidoreductase subunit J, chloroplastic.